An 88-amino-acid polypeptide reads, in one-letter code: Small ribosomal subunit protein bS20 (88 aa).

The protein belongs to the bacterial ribosomal protein bS20 family.

Binds directly to 16S ribosomal RNA. In Bacillus licheniformis (strain ATCC 14580 / DSM 13 / JCM 2505 / CCUG 7422 / NBRC 12200 / NCIMB 9375 / NCTC 10341 / NRRL NRS-1264 / Gibson 46), this protein is Small ribosomal subunit protein bS20.